The chain runs to 722 residues: Catalase B (722 aa).

Positions 1–15 are cleaved as a signal peptide; it reads MRALGLVGLVGVANA. Active-site residues include histidine 100 and asparagine 173. Tyrosine 388 lines the heme pocket.

Belongs to the catalase family. Requires heme as cofactor.

It is found in the secreted. The enzyme catalyses 2 H2O2 = O2 + 2 H2O. Its function is as follows. Occurs in almost all aerobically respiring organisms and serves to protect cells from the toxic effects of hydrogen peroxide. This Emericella nidulans (strain FGSC A4 / ATCC 38163 / CBS 112.46 / NRRL 194 / M139) (Aspergillus nidulans) protein is Catalase B (catB).